We begin with the raw amino-acid sequence, 139 residues long: Large ribosomal subunit protein uL16 (139 aa).

Belongs to the universal ribosomal protein uL16 family. As to quaternary structure, part of the 50S ribosomal subunit.

Functionally, binds 23S rRNA and is also seen to make contacts with the A and possibly P site tRNAs. The protein is Large ribosomal subunit protein uL16 of Gloeothece citriformis (strain PCC 7424) (Cyanothece sp. (strain PCC 7424)).